We begin with the raw amino-acid sequence, 481 residues long: Protein nucleotidyltransferase YdiU (481 aa).

Gly85, Gly87, Arg88, Lys108, Asp120, Gly121, Arg172, and Arg179 together coordinate ATP. Residue Asp248 is the Proton acceptor of the active site. Asn249 and Asp258 together coordinate Mg(2+). Asp258 is a binding site for ATP.

It belongs to the SELO family. The cofactor is Mg(2+). Requires Mn(2+) as cofactor.

It carries out the reaction L-seryl-[protein] + ATP = 3-O-(5'-adenylyl)-L-seryl-[protein] + diphosphate. The enzyme catalyses L-threonyl-[protein] + ATP = 3-O-(5'-adenylyl)-L-threonyl-[protein] + diphosphate. It catalyses the reaction L-tyrosyl-[protein] + ATP = O-(5'-adenylyl)-L-tyrosyl-[protein] + diphosphate. The catalysed reaction is L-histidyl-[protein] + UTP = N(tele)-(5'-uridylyl)-L-histidyl-[protein] + diphosphate. It carries out the reaction L-seryl-[protein] + UTP = O-(5'-uridylyl)-L-seryl-[protein] + diphosphate. The enzyme catalyses L-tyrosyl-[protein] + UTP = O-(5'-uridylyl)-L-tyrosyl-[protein] + diphosphate. Its function is as follows. Nucleotidyltransferase involved in the post-translational modification of proteins. It can catalyze the addition of adenosine monophosphate (AMP) or uridine monophosphate (UMP) to a protein, resulting in modifications known as AMPylation and UMPylation. In Cereibacter sphaeroides (strain ATCC 17029 / ATH 2.4.9) (Rhodobacter sphaeroides), this protein is Protein nucleotidyltransferase YdiU.